The sequence spans 333 residues: tRNA uridine(34) hydroxylase (333 aa).

Residues 123–217 (SDPEVVLVDT…YLEEVNKAES (95 aa)) enclose the Rhodanese domain. Cysteine 177 (cysteine persulfide intermediate) is an active-site residue. Residues 313 to 327 (QKKEALRKQSAEKNK) show a composition bias toward basic and acidic residues. A disordered region spans residues 313 to 333 (QKKEALRKQSAEKNKAKQANA).

This sequence belongs to the TrhO family.

The catalysed reaction is uridine(34) in tRNA + AH2 + O2 = 5-hydroxyuridine(34) in tRNA + A + H2O. Functionally, catalyzes oxygen-dependent 5-hydroxyuridine (ho5U) modification at position 34 in tRNAs. The chain is tRNA uridine(34) hydroxylase from Shewanella oneidensis (strain ATCC 700550 / JCM 31522 / CIP 106686 / LMG 19005 / NCIMB 14063 / MR-1).